Here is a 297-residue protein sequence, read N- to C-terminus: Tyrosine recombinase XerD (297 aa).

A Core-binding (CB) domain is found at 1–86; the sequence is MNDLIEDFLH…SLRSFFHYLM (86 aa). Residues 107 to 291 form the Tyr recombinase domain; that stretch reads GLPKVLNLDD…TKLRLKDVYK (185 aa). Catalysis depends on residues arginine 147, lysine 171, histidine 243, arginine 246, and histidine 269. Tyrosine 278 functions as the O-(3'-phospho-DNA)-tyrosine intermediate in the catalytic mechanism.

The protein belongs to the 'phage' integrase family. XerD subfamily. As to quaternary structure, forms a cyclic heterotetrameric complex composed of two molecules of XerC and two molecules of XerD.

Its subcellular location is the cytoplasm. Site-specific tyrosine recombinase, which acts by catalyzing the cutting and rejoining of the recombining DNA molecules. The XerC-XerD complex is essential to convert dimers of the bacterial chromosome into monomers to permit their segregation at cell division. It also contributes to the segregational stability of plasmids. The polypeptide is Tyrosine recombinase XerD (Listeria monocytogenes serotype 4b (strain F2365)).